The chain runs to 373 residues: MSQGRLEERLTISKRELARLLKELKKWSAPATVLLSLYIPPGRPLSDVMTLLRQEYSITDNIKLKRTRQAVKRALSAAMDRLQMLTSTPPNGLVLFCGEDMSTGKFECFMFSPPEPIRVFYYRTDKRFITDFLEDMVEDNNAIGIIIVERDQATIGLLKGARLEVLKELEGFVPGKHKMGGQSQRRYERIIEQMVDEFFKKVGEEASNLLVPLAEKGVLKGVIVAGPGLAKQEFVEGNYLDYRLKKILAPELVDVAYQGLQGLKEAVMKAEKVVEAQMYRDAVNAMEEFKLHLAKGTGMIVYGEKDVEAALEMGAVKTLLIHESREDLEEWVEKAKSSGAQVIVVPESLAEAEWFLKTFGGLAGILRFRISTV.

Belongs to the eukaryotic release factor 1 family. As to quaternary structure, heterodimer of two subunits, one of which binds GTP.

The protein resides in the cytoplasm. In terms of biological role, directs the termination of nascent peptide synthesis (translation) in response to the termination codons UAA, UAG and UGA. The chain is Peptide chain release factor subunit 1 (prf1) from Aeropyrum pernix (strain ATCC 700893 / DSM 11879 / JCM 9820 / NBRC 100138 / K1).